Here is a 339-residue protein sequence, read N- to C-terminus: Phenylalanine--tRNA ligase alpha subunit (339 aa).

Residue Glu254 participates in Mg(2+) binding.

It belongs to the class-II aminoacyl-tRNA synthetase family. Phe-tRNA synthetase alpha subunit type 1 subfamily. As to quaternary structure, tetramer of two alpha and two beta subunits. Mg(2+) serves as cofactor.

Its subcellular location is the cytoplasm. The enzyme catalyses tRNA(Phe) + L-phenylalanine + ATP = L-phenylalanyl-tRNA(Phe) + AMP + diphosphate + H(+). In Dictyoglomus thermophilum (strain ATCC 35947 / DSM 3960 / H-6-12), this protein is Phenylalanine--tRNA ligase alpha subunit.